Reading from the N-terminus, the 118-residue chain is MNNKEIGKLGEDFTVEFLSSRGFIVLERNYKVSFGEIDIIARKGDILIFVEVKTRRNLDFGMPVESVSFEKQNRIKKIAEIYVKNKQLRFKEIRFDIMSIILSPKGEVLNWEYLPNAF.

This sequence belongs to the UPF0102 family.

The chain is UPF0102 protein Dtur_1530 from Dictyoglomus turgidum (strain DSM 6724 / Z-1310).